The sequence spans 650 residues: MADTPPPLIELIDLERVFDSSEVPVRALDRVSLTIHEGEFVAIIGQSGSGKSTLMSILGCLDRPTGGLYRLGGIDVASLDPVALAGLRRDTFGFVFQRYNLLAGASAAENVEMPAVYAGQPRHQRLERAHALLDRLGMGARSGHFPNQLSGGQQQRVSIARALMNDPRVILADEPTGALDSASGRDVLALLEALHTEGRTVILITHDRDVAARAERVIALQDGRVVEDSGRPAPVGSDRPLGRPPGGAAYLGMAASFGEALKMAGRSLRANIFRTALTLLGVVIGVAAVVTMMAIGEGSKQDVLTRIQSMGTNLLLVRPGAPGIRPSGTDVSLTPTDAEAVAQLAGMAAVAPERMASGITVRREGIDYRTTINGTWPAYAAAKDWPMAWGSFFDATDLQASAPVAVLGQTVAKNLFPGEEDPVGSYFLVRNVPFLVIGVLEAKGATPFGQDQDDIVLIPLTTAFARVSGGRYLSSLTARVEDATTIDESQAAIESLLQARHGKVDFQVRNTQSLLEMVEKTQNSLTLLLGAVALISLLVGGIGVMNIMLVSVTERTREIGIRLATGARASDILLQFNTEAVAVCGVGGLAGVGLGLGAALAVAEFGLPVRFTPGPPIVAFCCAFLTGLLFGYLPARKAARLDPVVALSAE.

Positions 9–248 constitute an ABC transporter domain; sequence IELIDLERVF…RPLGRPPGGA (240 aa). An ATP-binding site is contributed by 45–52; that stretch reads GQSGSGKS. 4 helical membrane passes run 276-296, 525-545, 580-600, and 615-635; these read ALTLLGVVIGVAAVVTMMAIG, LTLLLGAVALISLLVGGIGVM, AVAVCGVGGLAGVGLGLGAAL, and PPIVAFCCAFLTGLLFGYLPA.

This sequence belongs to the ABC transporter superfamily. Macrolide exporter (TC 3.A.1.122) family. In terms of assembly, homodimer.

The protein resides in the cell inner membrane. In terms of biological role, non-canonical ABC transporter that contains transmembrane domains (TMD), which form a pore in the inner membrane, and an ATP-binding domain (NBD), which is responsible for energy generation. Confers resistance against macrolides. The chain is Macrolide export ATP-binding/permease protein MacB from Rhodospirillum rubrum (strain ATCC 11170 / ATH 1.1.1 / DSM 467 / LMG 4362 / NCIMB 8255 / S1).